The sequence spans 577 residues: CDPK-related kinase 7 (577 aa).

The segment at 1–38 is disordered; the sequence is MGLCHGKPIEQQSKNLPISNEIEETPKNSSQKAKSSGF. Gly2 is lipidated: N-myristoyl glycine. In terms of domain architecture, Protein kinase spans 124–386; the sequence is YEIDGEVGRG…AAQALCHPWL (263 aa). Residues 130–138 and Lys156 contribute to the ATP site; that span reads VGRGHFGYT. Asp252 functions as the Proton acceptor in the catalytic mechanism. Ser292 is modified (phosphoserine). Ser334 carries the post-translational modification Phosphoserine; by CPK1, CPK10 and CPK34. Residues 391–421 form an autoinhibitory domain region; sequence ELKIPSDMIIYKLVKVYIMSSSLRKSALAAL. The interval 410–430 is calmodulin binding (CaMBD); it reads SSSLRKSALAALAKTLTVPQL. EF-hand domains lie at 428–464, 465–500, 501–540, and 543–572; these read PQLT…STEA, TKDS…VYQL, EAME…GPSV, and HVVL…VSSR. Positions 443, 445, 447, 484, 489, 520, 522, 529, 554, and 556 each coordinate Ca(2+). Ser558 is subject to Phosphoserine.

It belongs to the protein kinase superfamily. Ser/Thr protein kinase family. CDPK subfamily. In terms of assembly, binds calmodulin (CaM) in a calcium-dependent manner. Post-translationally, autophosphorylated.

It localises to the membrane. The catalysed reaction is L-seryl-[protein] + ATP = O-phospho-L-seryl-[protein] + ADP + H(+). The enzyme catalyses L-threonyl-[protein] + ATP = O-phospho-L-threonyl-[protein] + ADP + H(+). Its activity is regulated as follows. Activated by calcium and calmodulin. Autophosphorylation may play an important role in the regulation of the kinase activity. Functionally, may play a role in signal transduction pathways that involve calcium as a second messenger. The chain is CDPK-related kinase 7 (CRK7) from Arabidopsis thaliana (Mouse-ear cress).